Reading from the N-terminus, the 252-residue chain is Fructose-1,6-bisphosphatase/inositol-1-monophosphatase (252 aa).

Residues D38, T40, E67, D82, L84, and D85 each contribute to the Mg(2+) site. Residues 85–87 (DGT), R167, A172, and R191 each bind substrate. D200 provides a ligand contact to Mg(2+).

Belongs to the inositol monophosphatase superfamily. FBPase class 4 family. Homodimer. Requires Mg(2+) as cofactor. It depends on Mn(2+) as a cofactor.

It catalyses the reaction beta-D-fructose 1,6-bisphosphate + H2O = beta-D-fructose 6-phosphate + phosphate. The catalysed reaction is a myo-inositol phosphate + H2O = myo-inositol + phosphate. Both FBPase and IMPase activities are inhibited by Ca(2+). In contrast to mammalian I-1-P phosphatases, is only very weakly inhibited by Li(+) (with an IC(50) of about 290 mM). Phosphatase with broad specificity; it can dephosphorylate fructose 1,6-bisphosphate, both D and L isomers of inositol-1-phosphate (I-1-P), 2'-AMP, pNPP, inositol-2-phosphate, beta-glycerol phosphate, and alpha-D-glucose-1-phosphate. Cannot hydrolyze glucose-6-phosphate and fructose-6-phosphate. May be involved in the biosynthesis of a unique osmolyte, di-myo-inositol 1,1-phosphate. This is Fructose-1,6-bisphosphatase/inositol-1-monophosphatase (suhB) from Archaeoglobus fulgidus (strain ATCC 49558 / DSM 4304 / JCM 9628 / NBRC 100126 / VC-16).